A 1273-amino-acid chain; its full sequence is DNA-directed RNA polymerase subunit beta (1273 aa).

Belongs to the RNA polymerase beta chain family. The RNAP catalytic core consists of 2 alpha, 1 beta, 1 beta' and 1 omega subunit. When a sigma factor is associated with the core the holoenzyme is formed, which can initiate transcription.

It carries out the reaction RNA(n) + a ribonucleoside 5'-triphosphate = RNA(n+1) + diphosphate. DNA-dependent RNA polymerase catalyzes the transcription of DNA into RNA using the four ribonucleoside triphosphates as substrates. The protein is DNA-directed RNA polymerase subunit beta of Phytoplasma mali (strain AT).